We begin with the raw amino-acid sequence, 163 residues long: Protein-export protein SecB (163 aa).

The protein belongs to the SecB family. In terms of assembly, homotetramer, a dimer of dimers. One homotetramer interacts with 1 SecA dimer.

It is found in the cytoplasm. One of the proteins required for the normal export of preproteins out of the cell cytoplasm. It is a molecular chaperone that binds to a subset of precursor proteins, maintaining them in a translocation-competent state. It also specifically binds to its receptor SecA. The chain is Protein-export protein SecB from Burkholderia cenocepacia (strain ATCC BAA-245 / DSM 16553 / LMG 16656 / NCTC 13227 / J2315 / CF5610) (Burkholderia cepacia (strain J2315)).